Reading from the N-terminus, the 381-residue chain is Alpha-methylacyl-CoA racemase (381 aa).

Residues arginine 36 and 54–57 (LDLK) contribute to the substrate site. The residue at position 57 (lysine 57) is an N6-acetyllysine. N6-acetyllysine; alternate occurs at positions 86 and 100. N6-succinyllysine; alternate is present on residues lysine 86 and lysine 100. Lysine 117 bears the N6-acetyllysine mark. 120-125 (GHDINY) is a binding site for substrate. Histidine 121 acts as the Proton acceptor in catalysis. Aspartate 151 serves as the catalytic Proton donor. Lysine 267 is subject to N6-succinyllysine. A disordered region spans residues 316–344 (TDGEQLPSPRPAPLLSRTPAVPSAKRDPS). A Microbody targeting signal motif is present at residues 379 to 381 (ANL).

Belongs to the CoA-transferase III family. Monomer.

The protein resides in the peroxisome. Its subcellular location is the mitochondrion. It catalyses the reaction a (2S)-2-methylacyl-CoA = a (2R)-2-methylacyl-CoA. The enzyme catalyses (25R)-3alpha,7alpha,12alpha-trihydroxy-5beta-cholestan-26-oyl-CoA = (25S)-3alpha,7alpha,12alpha-trihydroxy-5beta-cholestan-26-oyl-CoA. The catalysed reaction is (2R,6)-dimethylheptanoyl-CoA = (2S,6)-dimethylheptanoyl-CoA. Its pathway is lipid metabolism; bile acid biosynthesis. It functions in the pathway lipid metabolism; fatty acid metabolism. Functionally, catalyzes the interconversion of (R)- and (S)-stereoisomers of alpha-methyl-branched-chain fatty acyl-CoA esters. Acts only on coenzyme A thioesters, not on free fatty acids, and accepts as substrates a wide range of alpha-methylacyl-CoAs, including pristanoyl-CoA, trihydroxycoprostanoyl-CoA (an intermediate in bile acid synthesis), and arylpropionic acids like the anti-inflammatory drug ibuprofen (2-(4-isobutylphenyl)propionic acid) but neither 3-methyl-branched nor linear-chain acyl-CoAs. The protein is Alpha-methylacyl-CoA racemase (Amacr) of Mus musculus (Mouse).